Reading from the N-terminus, the 117-residue chain is MEKKTAYCLLFLVLLVPYTALGAVLKRAPAKKEKRAVPLAVPLVYWGASVSPAVWNWLLVTFGAAAVAAAAVTVSDNDSHSCANNRGWCRSRCFSHEYIDSWHSDVCGSYDCCRPRY.

A signal peptide spans 1–23; it reads MEKKTAYCLLFLVLLVPYTALGA. Positions 24–33 are excised as a propeptide; the sequence is VLKRAPAKKE. Cystine bridges form between Cys-82–Cys-112, Cys-89–Cys-107, and Cys-93–Cys-113.

This sequence belongs to the big defensin family.

The protein resides in the secreted. Significantly inhibits the growth of Gram-negative and Gram-positive bacteria and fungi in vitro. This Branchiostoma belcheri (Amphioxus) protein is Big defensin.